Reading from the N-terminus, the 190-residue chain is Recombination protein RecR (190 aa).

The segment at 58-73 adopts a C4-type zinc-finger fold; it reads CEQCGALSENELCEIC. The region spanning 81 to 167 is the Toprim domain; that stretch reads NILCIVESPK…TFSKIAQGIP (87 aa).

The protein belongs to the RecR family.

In terms of biological role, may play a role in DNA repair. It seems to be involved in an RecBC-independent recombinational process of DNA repair. It may act with RecF and RecO. This Campylobacter jejuni (strain RM1221) protein is Recombination protein RecR.